A 63-amino-acid polypeptide reads, in one-letter code: MAVPFRRQSKGRKRRRRSHYKLKTPTIVVDPQTGEFTLPHRVTPNSGYYKGQLVLAKKVKKED.

It belongs to the bacterial ribosomal protein bL32 family.

The protein is Large ribosomal subunit protein bL32 of Acholeplasma laidlawii.